We begin with the raw amino-acid sequence, 122 residues long: MIQTETRLEVADNTGAREVMCIKVLGGSKRRYANIGDIIKVSVKEATPRGRVKKGEIYNAVVVRTAKGVRRQDGSLIKFDGNAAVLLNTKLEPIGTRIFGPVTRELRSERFMKIVSLAPEVL.

The protein belongs to the universal ribosomal protein uL14 family. Part of the 50S ribosomal subunit. Forms a cluster with proteins L3 and L19. In the 70S ribosome, L14 and L19 interact and together make contacts with the 16S rRNA in bridges B5 and B8.

Its function is as follows. Binds to 23S rRNA. Forms part of two intersubunit bridges in the 70S ribosome. This Paraburkholderia phymatum (strain DSM 17167 / CIP 108236 / LMG 21445 / STM815) (Burkholderia phymatum) protein is Large ribosomal subunit protein uL14.